The sequence spans 325 residues: Beta-ketoacyl-[acyl-carrier-protein] synthase III (325 aa).

Catalysis depends on residues cysteine 112 and histidine 250. The segment at 251–255 (QANSR) is ACP-binding. Asparagine 280 is a catalytic residue.

It belongs to the thiolase-like superfamily. FabH family. In terms of assembly, homodimer.

The protein localises to the cytoplasm. The catalysed reaction is malonyl-[ACP] + acetyl-CoA + H(+) = 3-oxobutanoyl-[ACP] + CO2 + CoA. It functions in the pathway lipid metabolism; fatty acid biosynthesis. Functionally, catalyzes the condensation reaction of fatty acid synthesis by the addition to an acyl acceptor of two carbons from malonyl-ACP. Catalyzes the first condensation reaction which initiates fatty acid synthesis and may therefore play a role in governing the total rate of fatty acid production. Possesses both acetoacetyl-ACP synthase and acetyl transacylase activities. Its substrate specificity determines the biosynthesis of branched-chain and/or straight-chain of fatty acids. The protein is Beta-ketoacyl-[acyl-carrier-protein] synthase III of Lactococcus lactis subsp. cremoris (strain MG1363).